Consider the following 174-residue polypeptide: 3-hydroxyanthranilate 3,4-dioxygenase (174 aa).

An O2-binding site is contributed by arginine 47. Fe cation is bound by residues histidine 51, glutamate 57, and histidine 95. Substrate is bound at residue glutamate 57. Arginine 99 and glutamate 110 together coordinate substrate. Fe cation contacts are provided by cysteine 125, cysteine 128, cysteine 162, and cysteine 165.

This sequence belongs to the 3-HAO family. Homodimer. Fe(2+) is required as a cofactor.

It catalyses the reaction 3-hydroxyanthranilate + O2 = (2Z,4Z)-2-amino-3-carboxymuconate 6-semialdehyde. Its pathway is cofactor biosynthesis; NAD(+) biosynthesis; quinolinate from L-kynurenine: step 3/3. Its function is as follows. Catalyzes the oxidative ring opening of 3-hydroxyanthranilate to 2-amino-3-carboxymuconate semialdehyde, which spontaneously cyclizes to quinolinate. The sequence is that of 3-hydroxyanthranilate 3,4-dioxygenase from Burkholderia lata (strain ATCC 17760 / DSM 23089 / LMG 22485 / NCIMB 9086 / R18194 / 383).